A 233-amino-acid polypeptide reads, in one-letter code: Small ribosomal subunit protein eS4 (233 aa).

The S4 RNA-binding domain occupies 37–99 (VPLVVVLRDV…RDEYYRVFPD (63 aa)).

This sequence belongs to the eukaryotic ribosomal protein eS4 family.

This Halobacterium salinarum (strain ATCC 29341 / DSM 671 / R1) protein is Small ribosomal subunit protein eS4.